The sequence spans 693 residues: F-box protein MAX2 (693 aa).

Residues 3–50 enclose the F-box domain; it reads STTLSDLPDVILSTISSLVSDSRARNSLSLVSHKFLALERSTRSHLTI. LRR repeat units follow at residues 9 to 34, 49 to 74, 75 to 100, 110 to 135, 141 to 167, 168 to 196, 200 to 225, 232 to 257, 274 to 299, 302 to 327, 332 to 356, 357 to 382, 383 to 409, and 410 to 436; these read LPDV…SLVS, TIRG…DLSF, LSPW…RLKF, VYTR…KLLR, SQIP…DLSN, FYHW…DLLT, TEGY…RVAC, FEFV…HMVD, DSAV…VLDV, DVKH…KLGQ, CSAT…SIKN, SGDL…EIQG, CENV…RISC, and CKNL…HIDC. Residues 445 to 465 are disordered; it reads EVEGRVETSEADHEEEDDGYE. LRR repeat units follow at residues 480 to 505, 508 to 532, 541 to 565, and 608 to 637; these read CSTS…SLWI, GEFL…RIKI, RPAE…QLDC, and DRDV…FIHG.

In terms of assembly, part of a SCF (SKP1-cullin-F-box) protein ligase complex. Interacts with SKP1A/ASK1. Interacts with CUL1. Interacts with SMXL6, SMXL7 and SMXL8. Interacts with D14. Forms a complex with D14 and SKP1A/ASK1 in presence of strigolactone. As to expression, expressed in the vasculature of growing leaves and roots, rosette axillary bud, flowers, siliques, funiculi and stems.

It localises to the nucleus. It functions in the pathway protein modification; protein ubiquitination. Functionally, component of SCF(ASK-cullin-F-box) E3 ubiquitin ligase complexes, which may mediate the ubiquitination and subsequent proteasomal degradation of target proteins. Promotes the senescence. Is necessary for responses to strigolactones and karrikins. Contributes to the selective repression of axillary shoots and moderates the branching by regulating negatively the auxin transport in primary stems, in an AXR1-independent manner. Required for the progression of leaf senescence mediated by methyl jasmonate. Required at each node to suppress axillary bud growth. The polypeptide is F-box protein MAX2 (Arabidopsis thaliana (Mouse-ear cress)).